The chain runs to 203 residues: Guanylate kinase (203 aa).

Residues 3-181 (GTLYIVSAPS…ALDDLKAIFR (179 aa)) form the Guanylate kinase-like domain. 10–17 (APSGAGKT) serves as a coordination point for ATP.

It belongs to the guanylate kinase family.

Its subcellular location is the cytoplasm. The enzyme catalyses GMP + ATP = GDP + ADP. Essential for recycling GMP and indirectly, cGMP. The polypeptide is Guanylate kinase (gmk) (Pseudomonas aeruginosa (strain ATCC 15692 / DSM 22644 / CIP 104116 / JCM 14847 / LMG 12228 / 1C / PRS 101 / PAO1)).